The sequence spans 135 residues: Integration host factor subunit beta (135 aa).

Over residues 83–92 the composition is skewed to basic and acidic residues; it reads GKELRERVDR. The interval 83 to 135 is disordered; the sequence is GKELRERVDRTVTQGGGMNGNGHAPHGKTGQSQLGSQSPASLHDDGQLNLVRS. The segment covering 111-122 has biased composition (polar residues); sequence TGQSQLGSQSPA.

The protein belongs to the bacterial histone-like protein family. Heterodimer of an alpha and a beta chain.

This protein is one of the two subunits of integration host factor, a specific DNA-binding protein that functions in genetic recombination as well as in transcriptional and translational control. This Cupriavidus metallidurans (strain ATCC 43123 / DSM 2839 / NBRC 102507 / CH34) (Ralstonia metallidurans) protein is Integration host factor subunit beta.